The following is a 346-amino-acid chain: MASLGGDNSQAEGAEVRHVPVLIAEVIDALKPAPGAVIVDGTFGAGGYTRRILETGADVIAIDRDPTAIEAGRAMEKEFPGRLNLVESRFSALDEAVARMSGAGKKVDGVVLDIGVSSMQIDEAERGFSFQKDGPLDMRMSSRGSSAADAVNRLKTGDLARIFNFLGEERHAGRIARMIEKRRAAKPFTRTLDLANAIETLVGRNPKDRIHPATRVFQALRVYVNDELGELARALLAAERILKPGGRLVVVTFHSLEDRMVKRFFADRAGGSAGSRHMPETHMRLPSFTPAVKGAVGPTPEEEERNPRARSAKLRAGIRTENSPLEDDLSLFGLPKLPETNELARS.

S-adenosyl-L-methionine-binding positions include 46–48 (GGY), Asp63, Phe90, Asp113, and Gln120. The tract at residues 270 to 327 (GGSAGSRHMPETHMRLPSFTPAVKGAVGPTPEEEERNPRARSAKLRAGIRTENSPLED) is disordered.

This sequence belongs to the methyltransferase superfamily. RsmH family.

It localises to the cytoplasm. The catalysed reaction is cytidine(1402) in 16S rRNA + S-adenosyl-L-methionine = N(4)-methylcytidine(1402) in 16S rRNA + S-adenosyl-L-homocysteine + H(+). In terms of biological role, specifically methylates the N4 position of cytidine in position 1402 (C1402) of 16S rRNA. The chain is Ribosomal RNA small subunit methyltransferase H from Brucella ovis (strain ATCC 25840 / 63/290 / NCTC 10512).